The following is a 217-amino-acid chain: External core antigen (217 aa).

An N-terminal signal peptide occupies residues 1-19; sequence MYLFHLCLVFACVPCPTFQ. The tract at residues 26-28 is HBEAG; the sequence is GWL. Positions 180 to 217 are disordered; it reads RRGGARASRSPRRRTPSPRRRRSQSPRRRRSQSPSANC. Residues 188–210 show a composition bias toward basic residues; sequence RSPRRRTPSPRRRRSQSPRRRRS. Residues 189 to 195 form a 1; half-length repeat; that stretch reads SPRRRTP. A 3 X 8 AA repeats of S-P-R-R-R-R-S-Q region spans residues 189–211; it reads SPRRRTPSPRRRRSQSPRRRRSQ. The propeptide occupies 189 to 217; it reads SPRRRTPSPRRRRSQSPRRRRSQSPSANC. 2 tandem repeats follow at residues 196–203 and 204–211.

Belongs to the orthohepadnavirus precore antigen family. Homodimerizes. Phosphorylated. In terms of processing, cleaved by host furin.

The protein localises to the secreted. The protein resides in the host nucleus. In terms of biological role, may regulate immune response to the intracellular capsid in acting as a T-cell tolerogen, by having an immunoregulatory effect which prevents destruction of infected cells by cytotoxic T-cells. This immune regulation may predispose to chronicity during perinatal infections and prevent severe liver injury during adult infections. The chain is External core antigen from Marmota monax (Woodchuck).